Consider the following 201-residue polypeptide: Transmembrane 4 L6 family member 18 (201 aa).

At 1–9 the chain is on the cytoplasmic side; that stretch reads MGSRKCGSC. Residues 10–30 traverse the membrane as a helical segment; the sequence is LSSLLIPLALWSIIVNILLYF. Topologically, residues 31-49 are extracellular; sequence PNGQASYASSNKLTNYVWY. Residues 50 to 70 form a helical membrane-spanning segment; the sequence is FEGICFSGIMMLVVAAVLLVL. The Cytoplasmic segment spans residues 71 to 93; that stretch reads ENDNNYKCCQSENCSKKYMTVLS. Residues 94–114 traverse the membrane as a helical segment; sequence MIFSALGIAFSGYCLVISALG. At 115 to 157 the chain is on the extracellular side; it reads LLQGPYCRTLDGWEYAFEGTAGRFLTDSREWIQCLEPAHVVEW. Residues 158–178 traverse the membrane as a helical segment; sequence NIILFSILIALSGLQVIVCLI. Over 179 to 201 the chain is Cytoplasmic; the sequence is RVVIQLSKSLCGTYSVIIQPGII.

It belongs to the L6 tetraspanin family.

It localises to the membrane. The sequence is that of Transmembrane 4 L6 family member 18 (TM4SF18) from Bos taurus (Bovine).